The primary structure comprises 438 residues: Transposon Ty2-B Gag polyprotein (438 aa).

Composition is skewed to polar residues over residues 1–11 (MESQQLHQNPH), 19–39 (ASVT…SASN), and 49–60 (KVNSQQETTPGT). 3 disordered regions span residues 1–88 (MESQ…YQQH), 364–397 (KNVS…AKAH), and 419–438 (SSQY…TERI). An RNA-binding region spans residues 295–397 (ENNINVSDRL…SSKPRAAKAH (103 aa)). Low complexity predominate over residues 369 to 381 (TSPNTTNTKVTTR).

Homotrimer.

The protein localises to the cytoplasm. Capsid protein (CA) is the structural component of the virus-like particle (VLP), forming the shell that encapsulates the retrotransposons dimeric RNA genome. The particles are assembled from trimer-clustered units and there are holes in the capsid shells that allow for the diffusion of macromolecules. CA also has nucleocapsid-like chaperone activity, promoting primer tRNA(i)-Met annealing to the multipartite primer-binding site (PBS), dimerization of Ty2 RNA and initiation of reverse transcription. The protein is Transposon Ty2-B Gag polyprotein (TY2A-B) of Saccharomyces cerevisiae (strain ATCC 204508 / S288c) (Baker's yeast).